A 331-amino-acid polypeptide reads, in one-letter code: Tetraacyldisaccharide 4'-kinase (331 aa).

Residue Phe59–Thr66 participates in ATP binding.

This sequence belongs to the LpxK family.

It catalyses the reaction a lipid A disaccharide + ATP = a lipid IVA + ADP + H(+). The protein operates within glycolipid biosynthesis; lipid IV(A) biosynthesis; lipid IV(A) from (3R)-3-hydroxytetradecanoyl-[acyl-carrier-protein] and UDP-N-acetyl-alpha-D-glucosamine: step 6/6. Functionally, transfers the gamma-phosphate of ATP to the 4'-position of a tetraacyldisaccharide 1-phosphate intermediate (termed DS-1-P) to form tetraacyldisaccharide 1,4'-bis-phosphate (lipid IVA). The sequence is that of Tetraacyldisaccharide 4'-kinase from Alkalilimnicola ehrlichii (strain ATCC BAA-1101 / DSM 17681 / MLHE-1).